The sequence spans 334 residues: MIDPRLPLTDIHRHLDGNIRAQTILDLGQQFNLNLPANELDTLRPHVQITKTEPDLVSFLQKLDWGVAVLGSLDACRRVAYENVEDAAHAGLHYAELRFSPFYMAMKHQLPITGVVEAVIDGIASGCRDFNIDIRLIGILSRTFGEQACLQELDSLLAHREGITALDLAGDELGFPGSLFRRHFNRARDAGLRITVHAGEAAGPESIWQAIRELGAERIGHGVKAVEDRKLMDYLAEHKIGIESCLTSNIQTSTVVSLATHPLATFLRHGIVASINTDDPAVQGIEIAHEYLVAAPAAGLTPHEIRQAQANGLEMAFISEQEKQALRDKVFPIS.

Residues His12 and His14 each contribute to the Zn(2+) site. Positions 14, 16, and 170 each coordinate substrate. His197 is a binding site for Zn(2+). Glu200 acts as the Proton donor in catalysis. Position 278 (Asp278) interacts with Zn(2+). A substrate-binding site is contributed by Asp279.

It belongs to the metallo-dependent hydrolases superfamily. Adenosine and AMP deaminases family. Adenosine deaminase subfamily. The cofactor is Zn(2+).

The catalysed reaction is adenosine + H2O + H(+) = inosine + NH4(+). It catalyses the reaction 2'-deoxyadenosine + H2O + H(+) = 2'-deoxyinosine + NH4(+). Functionally, catalyzes the hydrolytic deamination of adenosine and 2-deoxyadenosine. This chain is Adenosine deaminase, found in Yersinia pseudotuberculosis serotype O:1b (strain IP 31758).